A 441-amino-acid chain; its full sequence is Xylose isomerase (441 aa).

Residues His99 and Asp102 contribute to the active site. Mn(2+) is bound by residues Glu230, Glu266, Asp294, Asp305, Asp307, and Asp337.

This sequence belongs to the xylose isomerase family. In terms of assembly, homotetramer. Mn(2+) serves as cofactor.

It localises to the cytoplasm. It carries out the reaction alpha-D-xylose = alpha-D-xylulofuranose. This is Xylose isomerase (xylA) from Geobacillus stearothermophilus (Bacillus stearothermophilus).